The primary structure comprises 211 residues: Large ribosomal subunit protein uL3 (211 aa).

Belongs to the universal ribosomal protein uL3 family. In terms of assembly, part of the 50S ribosomal subunit. Forms a cluster with proteins L14 and L19.

Functionally, one of the primary rRNA binding proteins, it binds directly near the 3'-end of the 23S rRNA, where it nucleates assembly of the 50S subunit. The sequence is that of Large ribosomal subunit protein uL3 from Geotalea daltonii (strain DSM 22248 / JCM 15807 / FRC-32) (Geobacter daltonii).